The chain runs to 279 residues: Pantothenate synthetase (279 aa).

Residue 26-33 (MGNLHDGH) participates in ATP binding. His-33 serves as the catalytic Proton donor. Position 57 (Gln-57) interacts with (R)-pantoate. Gln-57 contributes to the beta-alanine binding site. 144-147 (GKKD) is a binding site for ATP. Gln-150 contributes to the (R)-pantoate binding site. 181 to 184 (LSSR) contacts ATP.

Belongs to the pantothenate synthetase family. Homodimer.

The protein localises to the cytoplasm. The catalysed reaction is (R)-pantoate + beta-alanine + ATP = (R)-pantothenate + AMP + diphosphate + H(+). The protein operates within cofactor biosynthesis; (R)-pantothenate biosynthesis; (R)-pantothenate from (R)-pantoate and beta-alanine: step 1/1. Catalyzes the condensation of pantoate with beta-alanine in an ATP-dependent reaction via a pantoyl-adenylate intermediate. In Janthinobacterium sp. (strain Marseille) (Minibacterium massiliensis), this protein is Pantothenate synthetase.